A 475-amino-acid chain; its full sequence is Retrotransposon Gag-like protein 3 (475 aa).

Composition is skewed to basic and acidic residues over residues 51-66 (LLRK…KLPE) and 78-87 (KTPEFKEPQK). Disordered stretches follow at residues 51–101 (LLRK…EPPA), 152–173 (EPKN…APEY), and 397–421 (DPNP…ENQP). Residues 443 to 462 (RLCLYCGYPGHFARDCPVKP) form a CCHC-type zinc finger.

The protein localises to the nucleus. Its function is as follows. May function as a transcriptional regulator. Plays a role in postnatal myogenesis, may be involved in the regulation of satellite cells self-renewal. This Homo sapiens (Human) protein is Retrotransposon Gag-like protein 3.